Reading from the N-terminus, the 434-residue chain is Eukaryotic translation initiation factor 3 subunit E-1 (434 aa).

The 174-residue stretch at 219-392 (FFNHPKGRDL…GHVVMGTQPL (174 aa)) folds into the PCI domain.

This sequence belongs to the eIF-3 subunit E family. As to quaternary structure, component of the eukaryotic translation initiation factor 3 (eIF-3) complex. The eIF-3 complex interacts with pix. Interacts with mxt.

It localises to the cytoplasm. Its function is as follows. Component of the eukaryotic translation initiation factor 3 (eIF-3) complex, which is involved in protein synthesis of a specialized repertoire of mRNAs and, together with other initiation factors, stimulates binding of mRNA and methionyl-tRNAi to the 40S ribosome. The eIF-3 complex specifically targets and initiates translation of a subset of mRNAs involved in cell proliferation. This Drosophila willistoni (Fruit fly) protein is Eukaryotic translation initiation factor 3 subunit E-1 (eIF3-S6-1).